Here is a 227-residue protein sequence, read N- to C-terminus: 7-cyano-7-deazaguanine synthase (227 aa).

An ATP-binding site is contributed by 7–17; that stretch reads LSGGLDSSTIL. Zn(2+) contacts are provided by cysteine 191, cysteine 199, cysteine 202, and cysteine 205.

Belongs to the QueC family. Requires Zn(2+) as cofactor.

It carries out the reaction 7-carboxy-7-deazaguanine + NH4(+) + ATP = 7-cyano-7-deazaguanine + ADP + phosphate + H2O + H(+). The protein operates within purine metabolism; 7-cyano-7-deazaguanine biosynthesis. Functionally, catalyzes the ATP-dependent conversion of 7-carboxy-7-deazaguanine (CDG) to 7-cyano-7-deazaguanine (preQ(0)). This chain is 7-cyano-7-deazaguanine synthase, found in Trichormus variabilis (strain ATCC 29413 / PCC 7937) (Anabaena variabilis).